The chain runs to 459 residues: Exodeoxyribonuclease 7 large subunit (459 aa).

Belongs to the XseA family. As to quaternary structure, heterooligomer composed of large and small subunits.

The protein resides in the cytoplasm. It catalyses the reaction Exonucleolytic cleavage in either 5'- to 3'- or 3'- to 5'-direction to yield nucleoside 5'-phosphates.. Its function is as follows. Bidirectionally degrades single-stranded DNA into large acid-insoluble oligonucleotides, which are then degraded further into small acid-soluble oligonucleotides. The sequence is that of Exodeoxyribonuclease 7 large subunit from Pseudomonas aeruginosa (strain ATCC 15692 / DSM 22644 / CIP 104116 / JCM 14847 / LMG 12228 / 1C / PRS 101 / PAO1).